The chain runs to 94 residues: Large ribosomal subunit protein uL23 (94 aa).

The protein belongs to the universal ribosomal protein uL23 family. Part of the 50S ribosomal subunit. Contacts protein L29, and trigger factor when it is bound to the ribosome.

Its function is as follows. One of the early assembly proteins it binds 23S rRNA. One of the proteins that surrounds the polypeptide exit tunnel on the outside of the ribosome. Forms the main docking site for trigger factor binding to the ribosome. The polypeptide is Large ribosomal subunit protein uL23 (Geobacter metallireducens (strain ATCC 53774 / DSM 7210 / GS-15)).